A 343-amino-acid polypeptide reads, in one-letter code: Anthranilate phosphoribosyltransferase (343 aa).

Residues glycine 84, 87 to 88 (GD), threonine 92, 94 to 97 (NIST), 112 to 120 (KHGNRGVSS), and serine 124 contribute to the 5-phospho-alpha-D-ribose 1-diphosphate site. Glycine 84 provides a ligand contact to anthranilate. Serine 96 contacts Mg(2+). Asparagine 115 contributes to the anthranilate binding site. Residue arginine 170 participates in anthranilate binding. Mg(2+)-binding residues include aspartate 229 and glutamate 230.

Belongs to the anthranilate phosphoribosyltransferase family. In terms of assembly, homodimer. Mg(2+) is required as a cofactor.

The catalysed reaction is N-(5-phospho-beta-D-ribosyl)anthranilate + diphosphate = 5-phospho-alpha-D-ribose 1-diphosphate + anthranilate. Its pathway is amino-acid biosynthesis; L-tryptophan biosynthesis; L-tryptophan from chorismate: step 2/5. Catalyzes the transfer of the phosphoribosyl group of 5-phosphorylribose-1-pyrophosphate (PRPP) to anthranilate to yield N-(5'-phosphoribosyl)-anthranilate (PRA). The chain is Anthranilate phosphoribosyltransferase from Burkholderia ambifaria (strain ATCC BAA-244 / DSM 16087 / CCUG 44356 / LMG 19182 / AMMD) (Burkholderia cepacia (strain AMMD)).